The chain runs to 240 residues: Pyridoxine 5'-phosphate synthase (240 aa).

Residue Asn-7 coordinates 3-amino-2-oxopropyl phosphate. 1-deoxy-D-xylulose 5-phosphate is bound at residue 9–10 (DH). Position 18 (Arg-18) interacts with 3-amino-2-oxopropyl phosphate. The active-site Proton acceptor is the His-43. 1-deoxy-D-xylulose 5-phosphate-binding residues include Arg-45 and His-50. Catalysis depends on Glu-70, which acts as the Proton acceptor. Thr-100 serves as a coordination point for 1-deoxy-D-xylulose 5-phosphate. Residue His-191 is the Proton donor of the active site. 3-amino-2-oxopropyl phosphate is bound by residues Gly-192 and 213–214 (GH).

It belongs to the PNP synthase family. As to quaternary structure, homooctamer; tetramer of dimers.

It is found in the cytoplasm. The enzyme catalyses 3-amino-2-oxopropyl phosphate + 1-deoxy-D-xylulose 5-phosphate = pyridoxine 5'-phosphate + phosphate + 2 H2O + H(+). Its pathway is cofactor biosynthesis; pyridoxine 5'-phosphate biosynthesis; pyridoxine 5'-phosphate from D-erythrose 4-phosphate: step 5/5. Functionally, catalyzes the complicated ring closure reaction between the two acyclic compounds 1-deoxy-D-xylulose-5-phosphate (DXP) and 3-amino-2-oxopropyl phosphate (1-amino-acetone-3-phosphate or AAP) to form pyridoxine 5'-phosphate (PNP) and inorganic phosphate. This Cyanothece sp. (strain PCC 7425 / ATCC 29141) protein is Pyridoxine 5'-phosphate synthase.